We begin with the raw amino-acid sequence, 184 residues long: Cell division protein ZapC (184 aa).

This sequence belongs to the ZapC family. As to quaternary structure, interacts directly with FtsZ.

Its subcellular location is the cytoplasm. In terms of biological role, contributes to the efficiency of the cell division process by stabilizing the polymeric form of the cell division protein FtsZ. Acts by promoting interactions between FtsZ protofilaments and suppressing the GTPase activity of FtsZ. This is Cell division protein ZapC from Idiomarina loihiensis (strain ATCC BAA-735 / DSM 15497 / L2-TR).